Reading from the N-terminus, the 188-residue chain is Elongation factor P (188 aa).

It belongs to the elongation factor P family.

It is found in the cytoplasm. It participates in protein biosynthesis; polypeptide chain elongation. Its function is as follows. Involved in peptide bond synthesis. Stimulates efficient translation and peptide-bond synthesis on native or reconstituted 70S ribosomes in vitro. Probably functions indirectly by altering the affinity of the ribosome for aminoacyl-tRNA, thus increasing their reactivity as acceptors for peptidyl transferase. The polypeptide is Elongation factor P (efp) (Rickettsia conorii (strain ATCC VR-613 / Malish 7)).